We begin with the raw amino-acid sequence, 370 residues long: Queuine tRNA-ribosyltransferase (370 aa).

Catalysis depends on aspartate 89, which acts as the Proton acceptor. Substrate contacts are provided by residues 89–93 (DSGGF), aspartate 143, glutamine 185, and glycine 212. Residues 243–249 (GVGKPED) are RNA binding. The active-site Nucleophile is the aspartate 262. The interval 267–271 (TRNAR) is RNA binding; important for wobble base 34 recognition. Residues cysteine 300, cysteine 302, cysteine 305, and histidine 331 each contribute to the Zn(2+) site.

Belongs to the queuine tRNA-ribosyltransferase family. As to quaternary structure, homodimer. Within each dimer, one monomer is responsible for RNA recognition and catalysis, while the other monomer binds to the replacement base PreQ1. Zn(2+) serves as cofactor.

The catalysed reaction is 7-aminomethyl-7-carbaguanine + guanosine(34) in tRNA = 7-aminomethyl-7-carbaguanosine(34) in tRNA + guanine. The protein operates within tRNA modification; tRNA-queuosine biosynthesis. In terms of biological role, catalyzes the base-exchange of a guanine (G) residue with the queuine precursor 7-aminomethyl-7-deazaguanine (PreQ1) at position 34 (anticodon wobble position) in tRNAs with GU(N) anticodons (tRNA-Asp, -Asn, -His and -Tyr). Catalysis occurs through a double-displacement mechanism. The nucleophile active site attacks the C1' of nucleotide 34 to detach the guanine base from the RNA, forming a covalent enzyme-RNA intermediate. The proton acceptor active site deprotonates the incoming PreQ1, allowing a nucleophilic attack on the C1' of the ribose to form the product. After dissociation, two additional enzymatic reactions on the tRNA convert PreQ1 to queuine (Q), resulting in the hypermodified nucleoside queuosine (7-(((4,5-cis-dihydroxy-2-cyclopenten-1-yl)amino)methyl)-7-deazaguanosine). The sequence is that of Queuine tRNA-ribosyltransferase from Pseudoalteromonas atlantica (strain T6c / ATCC BAA-1087).